Here is a 339-residue protein sequence, read N- to C-terminus: uncharacterized protein (339 aa).

VOC domains lie at 2 to 127 and 141 to 276; these read EFDY…VRSE and TIDH…CLEI. The Fe cation site is built by histidine 144, histidine 222, and glutamate 306.

This sequence belongs to the 4HPPD family. Fe cation serves as cofactor.

This is an uncharacterized protein from Synechocystis sp. (strain ATCC 27184 / PCC 6803 / Kazusa).